The sequence spans 92 residues: Small ribosomal subunit protein uS19c (92 aa).

It belongs to the universal ribosomal protein uS19 family.

Its subcellular location is the plastid. The protein resides in the chloroplast. In terms of biological role, protein S19 forms a complex with S13 that binds strongly to the 16S ribosomal RNA. The protein is Small ribosomal subunit protein uS19c of Physcomitrium patens (Spreading-leaved earth moss).